A 98-amino-acid polypeptide reads, in one-letter code: Keratin, high sulfur matrix protein, IIIB4 (98 aa).

Ala-1 bears the N-acetylalanine mark.

It belongs to the KRTAP type 3 family. As to quaternary structure, interacts with wool keratins. In terms of tissue distribution, wool.

Its function is as follows. In the wool cortex, wool keratin intermediate filaments are embedded in an interfilamentous matrix, consisting of hair keratin-associated proteins (KRTAP), which are essential for the formation of a rigid and resistant wool shaft through their extensive disulfide bond cross-linking with abundant cysteine residues of wool keratins. The matrix proteins include the high-sulfur and high-glycine-tyrosine keratins. The polypeptide is Keratin, high sulfur matrix protein, IIIB4 (Ovis aries (Sheep)).